The chain runs to 447 residues: UDP-N-acetylmuramate--L-alanine ligase (447 aa).

108-114 (GSHGKTS) contributes to the ATP binding site.

It belongs to the MurCDEF family.

The protein localises to the cytoplasm. It carries out the reaction UDP-N-acetyl-alpha-D-muramate + L-alanine + ATP = UDP-N-acetyl-alpha-D-muramoyl-L-alanine + ADP + phosphate + H(+). The protein operates within cell wall biogenesis; peptidoglycan biosynthesis. Its function is as follows. Cell wall formation. In Listeria monocytogenes serotype 4b (strain F2365), this protein is UDP-N-acetylmuramate--L-alanine ligase.